Here is a 530-residue protein sequence, read N- to C-terminus: Cytochrome P450 monooxygenase apf7 (530 aa).

Residues 6–26 traverse the membrane as a helical segment; it reads VSPVSIWVFVIYAVTIIIAIY. The N-linked (GlcNAc...) asparagine glycan is linked to N85. Residue C464 participates in heme binding.

Belongs to the cytochrome P450 family. The cofactor is heme.

The protein resides in the membrane. It functions in the pathway secondary metabolite biosynthesis. Its function is as follows. Cytochrome P450 monooxygenase; part of the gene cluster that mediates the biosynthesis of the cyclic tetrapeptide apicidin F (APF). The non-ribosomal peptide synthetase apf1 incorporates four different amino acids to produce apicidin F: L-phenylalanine, D-pipecolic acid (D-pip), N-methoxy-L-tryptophan and L-2-aminooctanedioic acid. L-Phenylalanine is the only proteinogenic amino acid directly used by apf1. The 3 other apf1 substrates are non-proteinogenic and have to be modified by other enzymes of the cluster. Lysine is converted to delta-1-pyrroline-5-carboxylate (P5C) which is reduced to L-pipecolic acid (L-pip) by apf3. L-pip is epimerized to D-pip, probably by apf1 activity, prior to incorporation. L-Tryptophan is N-oxidyzed by one of the cytochrome P450 monooxygenases (apf7 or apf8), and further methylated at the hydroxy group by the O-methyltransferase apf6 to yield N-methoxy-L-tryptophan. The synthesis of the fourth apf1 substrate is more complex. The fatty acid synthase apf5 is involved in the synthesis of the octanoic acid backbone of L-2-aminooctanedioic acid by fixing one acetyl-CoA unit and three malonyl-CoA units. Then one of the cytochrome P450 monooxygenases (apf7 or apf8) may oxidize this backbone to 2-oxooctanoic acid. The aminotransferase apf4 is predicted to catalyze the exchange of the keto group with an amino group. The next step would be the oxidation of 2-aminooctanoic acid by one of the cytochrome P450 monooxygenases (apf7 or apf8). The last step is the oxidation of 2-amino-8-hydroxyoctanoic acid to 2-aminooctanedioic acid is catalyzed by the FAD-dependent monooxygenase apf9. The polypeptide is Cytochrome P450 monooxygenase apf7 (Gibberella fujikuroi (strain CBS 195.34 / IMI 58289 / NRRL A-6831) (Bakanae and foot rot disease fungus)).